The primary structure comprises 453 residues: Glutamyl-tRNA(Gln) amidotransferase subunit A (453 aa).

Active-site charge relay system residues include lysine 56 and serine 131. Residue serine 155 is the Acyl-ester intermediate of the active site.

The protein belongs to the amidase family. GatA subfamily. As to quaternary structure, heterotrimer of A, B and C subunits.

It catalyses the reaction L-glutamyl-tRNA(Gln) + L-glutamine + ATP + H2O = L-glutaminyl-tRNA(Gln) + L-glutamate + ADP + phosphate + H(+). Allows the formation of correctly charged Gln-tRNA(Gln) through the transamidation of misacylated Glu-tRNA(Gln) in organisms which lack glutaminyl-tRNA synthetase. The reaction takes place in the presence of glutamine and ATP through an activated gamma-phospho-Glu-tRNA(Gln). The protein is Glutamyl-tRNA(Gln) amidotransferase subunit A of Campylobacter jejuni subsp. jejuni serotype O:6 (strain 81116 / NCTC 11828).